We begin with the raw amino-acid sequence, 513 residues long: ABC transporter H family member 2 (513 aa).

An ABC transporter domain is found at 39 to 280 (LTMKNIHKTY…EHYQKLYKEC (242 aa)). 75 to 82 (GTSGGGKT) is an ATP binding site. The tract at residues 291–471 (VTSVFKNDDD…SSSYSNNNNN (181 aa)) is disordered. Positions 324 to 360 (SYNNNNSNLNNNSNSNSNNNSNNNNSKNYASSSSSSS) are enriched in low complexity. Residues 361 to 386 (VLNGKLSQSTVNNSSIYNHNNDSPFF) are compositionally biased toward polar residues. Low complexity predominate over residues 387 to 471 (NSNNNNNINN…SSSYSNNNNN (85 aa)).

The protein belongs to the ABC transporter superfamily.

This chain is ABC transporter H family member 2 (abcH2), found in Dictyostelium discoideum (Social amoeba).